The primary structure comprises 56 residues: uncharacterized protein (56 aa).

A helical membrane pass occupies residues 6–26 (MLLIMLYMVLVVNDLILYNIL).

It is found in the membrane. This is an uncharacterized protein from Dictyostelium discoideum (Social amoeba).